We begin with the raw amino-acid sequence, 110 residues long: Nucleoid-associated protein Ent638_0951 (110 aa).

This sequence belongs to the YbaB/EbfC family. In terms of assembly, homodimer.

Its subcellular location is the cytoplasm. The protein localises to the nucleoid. Its function is as follows. Binds to DNA and alters its conformation. May be involved in regulation of gene expression, nucleoid organization and DNA protection. This Enterobacter sp. (strain 638) protein is Nucleoid-associated protein Ent638_0951.